Here is a 333-residue protein sequence, read N- to C-terminus: Eukaryotic translation initiation factor 2 subunit 2 (333 aa).

Disordered stretches follow at residues 1-119 (MSGD…DLDI) and 139-164 (ILEK…NQTG). Ser2 bears the N-acetylserine mark. A phosphoserine mark is found at Ser2 and Ser13. Residues 13–22 (SKKKKKKKKP) are compositionally biased toward basic residues. Residues Thr31 and Thr36 each carry the phosphothreonine modification. Basic and acidic residues predominate over residues 40–51 (ETKEVEPEPTED). Position 67 is a phosphoserine (Ser67). A compositionally biased stretch (basic and acidic residues) spans 96-105 (EGVKDLKIES). A Glycyl lysine isopeptide (Lys-Gly) (interchain with G-Cter in SUMO2) cross-link involves residue Lys102. Ser105 is subject to Phosphoserine. Acidic residues-rich tracts occupy residues 106–118 (DVQE…DDLD) and 139–149 (ILEKDEALEDE). Thr111 bears the Phosphothreonine mark. Phosphoserine occurs at positions 158 and 218. Residues Lys265 and Lys293 each carry the N6-acetyllysine modification. The C4-type zinc finger occupies 281–305 (CHTCRSPDTILQKDTRLYFLQCETC).

The protein belongs to the eIF-2-beta/eIF-5 family. Eukaryotic translation initiation factor 2 eIF2 is a heterotrimeric complex composed of an alpha (EIF2S1), a beta (EIF2S2) and a gamma (EIF2S3) chain. eIF2 is member of the 43S pre-initiation complex (43S PIC). eIF2 forms a complex with at least CELF1/CUGBP1, CALR, CALR3, EIF2S1, EIF2S2, HSP90B1 and HSPA5. Interacts with BZW2/5MP1. Interacts with EIF5.

The protein resides in the cytoplasm. It localises to the cytosol. Component of the eIF2 complex that functions in the early steps of protein synthesis by forming a ternary complex with GTP and initiator tRNA. This complex binds to a 40S ribosomal subunit, followed by mRNA binding to form the 43S pre-initiation complex (43S PIC). Junction of the 60S ribosomal subunit to form the 80S initiation complex is preceded by hydrolysis of the GTP bound to eIF2 and release of an eIF2-GDP binary complex. In order for eIF2 to recycle and catalyze another round of initiation, the GDP bound to eIF2 must exchange with GTP by way of a reaction catalyzed by eIF2B. The sequence is that of Eukaryotic translation initiation factor 2 subunit 2 (EIF2S2) from Pongo abelii (Sumatran orangutan).